The following is a 420-amino-acid chain: uncharacterized protein (420 aa).

One can recognise a VWFA domain in the interval 43-215; that stretch reads NLCLVLDHSG…HTFRQLFQRM (173 aa). Residues 389–420 form a disordered region; it reads LQSGEDLSEGDRKKTRMVSKTTLQPPSAPSEH.

This is an uncharacterized protein from Synechocystis sp. (strain ATCC 27184 / PCC 6803 / Kazusa).